The following is a 126-amino-acid chain: Large ribosomal subunit protein bL12 (126 aa).

It belongs to the bacterial ribosomal protein bL12 family. In terms of assembly, homodimer. Part of the ribosomal stalk of the 50S ribosomal subunit. Forms a multimeric L10(L12)X complex, where L10 forms an elongated spine to which 2 to 4 L12 dimers bind in a sequential fashion. Binds GTP-bound translation factors.

In terms of biological role, forms part of the ribosomal stalk which helps the ribosome interact with GTP-bound translation factors. Is thus essential for accurate translation. The protein is Large ribosomal subunit protein bL12 of Helicobacter hepaticus (strain ATCC 51449 / 3B1).